The following is a 366-amino-acid chain: Aminomethyltransferase (366 aa).

This sequence belongs to the GcvT family. The glycine cleavage system is composed of four proteins: P, T, L and H.

The enzyme catalyses N(6)-[(R)-S(8)-aminomethyldihydrolipoyl]-L-lysyl-[protein] + (6S)-5,6,7,8-tetrahydrofolate = N(6)-[(R)-dihydrolipoyl]-L-lysyl-[protein] + (6R)-5,10-methylene-5,6,7,8-tetrahydrofolate + NH4(+). Its function is as follows. The glycine cleavage system catalyzes the degradation of glycine. This is Aminomethyltransferase from Chlorobium chlorochromatii (strain CaD3).